A 102-amino-acid chain; its full sequence is Amoebiasin-1 (102 aa).

Residues 27-32 carry the BC loop motif; sequence NPTTGY. The DE loop signature appears at 51–61; that stretch reads DQHAPGICGCG. An FG loop motif is present at residues 85–93; it reads PWAPNANDR.

The protein belongs to the protease inhibitor I42 family. In terms of assembly, monomer. During oxidative conditions, forms homooligomers; disulfide-linked. Interacts with cysteine protease CP2. Interacts with cysteine protease CP5. During oxidative conditions, cys-39, cys-58 and cys-60 react to form intra- and inter-molecular disulfide bonds resulting in the loss of the protein inhibitory activity.

It is found in the cytoplasm. Functionally, cysteine protease inhibitor. Inhibits cysteine proteases CP1, CP2 and CP5. May protect the cytosol against cysteine proteases released by damaged intracellular vesicles. The protein is Amoebiasin-1 of Entamoeba histolytica (strain ATCC 30459 / HM-1:IMSS / ABRM).